The following is a 214-amino-acid chain: Orotate phosphoribosyltransferase (214 aa).

Residue lysine 26 participates in 5-phospho-alpha-D-ribose 1-diphosphate binding. 34–35 contributes to the orotate binding site; the sequence is FF. 5-phospho-alpha-D-ribose 1-diphosphate-binding positions include 72 to 73, arginine 99, lysine 100, lysine 103, histidine 105, and 124 to 132; these read YK and DDVITAGTA. Orotate contacts are provided by threonine 128 and arginine 156.

Belongs to the purine/pyrimidine phosphoribosyltransferase family. PyrE subfamily. In terms of assembly, homodimer. Mg(2+) is required as a cofactor.

It carries out the reaction orotidine 5'-phosphate + diphosphate = orotate + 5-phospho-alpha-D-ribose 1-diphosphate. It functions in the pathway pyrimidine metabolism; UMP biosynthesis via de novo pathway; UMP from orotate: step 1/2. In terms of biological role, catalyzes the transfer of a ribosyl phosphate group from 5-phosphoribose 1-diphosphate to orotate, leading to the formation of orotidine monophosphate (OMP). This chain is Orotate phosphoribosyltransferase, found in Pasteurella multocida (strain Pm70).